The sequence spans 583 residues: Long-chain-fatty-acid--AMP ligase FadD26 (583 aa).

It belongs to the ATP-dependent AMP-binding enzyme family.

The catalysed reaction is holo-[(phenol)carboxyphthiodiolenone synthase] + a long-chain fatty acid + ATP = a long-chain fatty acyl-[(phenol)carboxyphthiodiolenone synthase] + AMP + diphosphate. The enzyme catalyses eicosanoate + holo-[(phenol)carboxyphthiodiolenone synthase] + ATP = icosanoyl-[(phenol)carboxyphthiodiolenone synthase] + AMP + diphosphate. It carries out the reaction holo-[(phenol)carboxyphthiodiolenone synthase] + docosanoate + ATP = docosanoyl-[(phenol)carboxyphthiodiolenone synthase] + AMP + diphosphate. The protein operates within lipid metabolism; fatty acid biosynthesis. In terms of biological role, catalyzes the activation of long-chain fatty acids as acyl-adenylates (acyl-AMP), which are then transferred to the multifunctional polyketide synthase PpsA for further chain extension. Catalyzes the adenylation of the long-chain fatty acids eicosanoate (C20) or docosanoate (C22), and potentially the very-long-chain fatty acid lignocerate (C24). Involved in the biosynthesis of phthiocerol dimycocerosate (DIM A) and phthiodiolone dimycocerosate (DIM B). This is Long-chain-fatty-acid--AMP ligase FadD26 (fadD26) from Mycobacterium tuberculosis (strain CDC 1551 / Oshkosh).